We begin with the raw amino-acid sequence, 159 residues long: Ribosome maturation factor RimM (159 aa).

The region spanning Ser-86 to Ile-159 is the PRC barrel domain.

It belongs to the RimM family. As to quaternary structure, binds ribosomal protein uS19.

It localises to the cytoplasm. Its function is as follows. An accessory protein needed during the final step in the assembly of 30S ribosomal subunit, possibly for assembly of the head region. Essential for efficient processing of 16S rRNA. May be needed both before and after RbfA during the maturation of 16S rRNA. It has affinity for free ribosomal 30S subunits but not for 70S ribosomes. In Acholeplasma laidlawii (strain PG-8A), this protein is Ribosome maturation factor RimM.